A 1177-amino-acid chain; its full sequence is Lysylphosphatidylglycerol biosynthesis bifunctional protein LysX (1177 aa).

Disordered regions lie at residues 1 to 40 (MRRAGRSRQFSSVEEAFSTSAARPGPRGRRSGRENTAKFV) and 61 to 85 (VTLASPGSRSGSGPRSGPRLGPRNR). Residues 1–676 (MRRAGRSRQF…LLHHDGSAPD (676 aa)) form a phosphatidylglycerol lysyltransferase region. Low complexity predominate over residues 65-85 (SPGSRSGSGPRSGPRLGPRNR). The next 6 membrane-spanning stretches (helical) occupy residues 93 to 113 (VPAAAGWTVGVIATVSLLGSV), 135 to 155 (FPDTSIAWSFVLALLAAALTA), 159 to 179 (IAWLLLLGNMILAAALNVADI), 189 to 209 (IFGENLGFAVHIVAIVLLVLA), 227 to 247 (AVLVAGDVVGILVSWGLVELF), and 281 to 301 (VFLNAIFGLFGALALIMATIV). A disordered region spans residues 673–693 (SAPDVSGLRPERTDAEEARSR). The interval 677-1177 (VSGLRPERTD…TLPFPLAKPH (501 aa)) is lysine--tRNA ligase. The segment covering 681–693 (RPERTDAEEARSR) has biased composition (basic and acidic residues). A DNA-binding region (OB) is located at residues 738–816 (ITVAGRILRI…SLIVTDWRMI (79 aa)). 2 residues coordinate Mg(2+): Asp1089 and Glu1096.

It in the N-terminal section; belongs to the LPG synthetase family. This sequence in the C-terminal section; belongs to the class-II aminoacyl-tRNA synthetase family. Mg(2+) serves as cofactor.

It is found in the cell membrane. It catalyses the reaction tRNA(Lys) + L-lysine + ATP = L-lysyl-tRNA(Lys) + AMP + diphosphate. It carries out the reaction L-lysyl-tRNA(Lys) + a 1,2-diacyl-sn-glycero-3-phospho-(1'-sn-glycerol) = a 1,2-diacyl-sn-glycero-3-phospho-1'-(3'-O-L-lysyl)-sn-glycerol + tRNA(Lys). Functionally, catalyzes the production of L-lysyl-tRNA(Lys)transfer and the transfer of a lysyl group from L-lysyl-tRNA(Lys) to membrane-bound phosphatidylglycerol (PG), which produces lysylphosphatidylglycerol (LPG), one of the components of the bacterial membrane with a positive net charge. LPG synthesis contributes to the resistance to cationic antimicrobial peptides (CAMPs) and likely protects M.tuberculosis against the CAMPs produced by competiting microorganisms (bacteriocins). In fact, the modification of anionic phosphatidylglycerol with positively charged L-lysine results in repulsion of the peptides. This is Lysylphosphatidylglycerol biosynthesis bifunctional protein LysX (lysX) from Mycolicibacterium paratuberculosis (strain ATCC BAA-968 / K-10) (Mycobacterium paratuberculosis).